Here is a 452-residue protein sequence, read N- to C-terminus: Phosphoglucosamine mutase (452 aa).

Ser108 functions as the Phosphoserine intermediate in the catalytic mechanism. 4 residues coordinate Mg(2+): Ser108, Asp247, Asp249, and Asp251. Residue Ser108 is modified to Phosphoserine.

This sequence belongs to the phosphohexose mutase family. The cofactor is Mg(2+). Activated by phosphorylation.

It catalyses the reaction alpha-D-glucosamine 1-phosphate = D-glucosamine 6-phosphate. Its function is as follows. Catalyzes the conversion of glucosamine-6-phosphate to glucosamine-1-phosphate. This chain is Phosphoglucosamine mutase, found in Paraburkholderia phymatum (strain DSM 17167 / CIP 108236 / LMG 21445 / STM815) (Burkholderia phymatum).